A 207-amino-acid chain; its full sequence is Ribosomal RNA large subunit methyltransferase E (207 aa).

Glycine 60, tryptophan 62, aspartate 80, aspartate 96, and aspartate 121 together coordinate S-adenosyl-L-methionine. Lysine 161 acts as the Proton acceptor in catalysis.

Belongs to the class I-like SAM-binding methyltransferase superfamily. RNA methyltransferase RlmE family.

The protein resides in the cytoplasm. The catalysed reaction is uridine(2552) in 23S rRNA + S-adenosyl-L-methionine = 2'-O-methyluridine(2552) in 23S rRNA + S-adenosyl-L-homocysteine + H(+). Its function is as follows. Specifically methylates the uridine in position 2552 of 23S rRNA at the 2'-O position of the ribose in the fully assembled 50S ribosomal subunit. The chain is Ribosomal RNA large subunit methyltransferase E from Pseudomonas paraeruginosa (strain DSM 24068 / PA7) (Pseudomonas aeruginosa (strain PA7)).